A 673-amino-acid polypeptide reads, in one-letter code: Protein-arginine deiminase type-2 (673 aa).

Residue Met1 is modified to N-acetylmethionine. Residues Asp131, Asp133, Asp135, Glu139, Asn162, Asp164, Asp166, Asp174, Asp177, Lys179, Asp185, and Asp188 each contribute to the Ca(2+) site. Arg352 is subject to Citrulline. Ca(2+) contacts are provided by Glu362, Asp397, Phe416, Leu419, and Glu420. Cys655 (nucleophile) is an active-site residue.

Belongs to the protein arginine deiminase family. As to quaternary structure, homodimer. Ca(2+) is required as a cofactor. Expressed in various tissues including muscle, uterus, spinal cord, salivary gland and pancreas.

The protein localises to the cytoplasm. It carries out the reaction L-arginyl-[protein] + H2O = L-citrullyl-[protein] + NH4(+). Functionally, catalyzes the deimination of arginine residues of proteins. This Mus musculus (Mouse) protein is Protein-arginine deiminase type-2 (Padi2).